We begin with the raw amino-acid sequence, 430 residues long: Pre-B-cell leukemia transcription factor 2 (430 aa).

Positions 1–52 are disordered; it reads MDERLLGPPPPGGGRGGLGLVSGEPGGPGEPPGGGDPGGGSGGVPGGRGKQD. Positions 13 to 48 are enriched in gly residues; that stretch reads GGRGGLGLVSGEPGGPGEPPGGGDPGGGSGGVPGGR. The PBC domain maps to 48 to 243; sequence RGKQDIGDIL…VMILRSRFLD (196 aa). Residues 55–134 are PBC-A; sequence DILQQIMTIT…EGVAGPEKGG (80 aa). Residues S136, S151, and S159 each carry the phosphoserine modification. A PBC-B region spans residues 137 to 243; sequence AAAAAAAAAS…VMILRSRFLD (107 aa). Positions 244 to 306 form a DNA-binding region, homeobox; TALE-type; it reads ARRKRRNFSK…NKRIRYKKNI (63 aa). Disordered stretches follow at residues 326-347 and 378-430; these read QGGH…GGSF and SMGP…DTSN. S330 carries the post-translational modification Phosphoserine. The segment covering 380 to 392 has biased composition (gly residues); sequence GPGGYGDNLGGGQ. Phosphoserine is present on S395. Over residues 403-418 the composition is skewed to polar residues; the sequence is GSWQEAVTPSSVTSPT.

Belongs to the TALE/PBX homeobox family. As to quaternary structure, forms heterodimers with MEIS1 and heterotrimers with MEIS1 and HOXA9. Interacts with PBXIP1. Ubiquitously expressed.

The protein resides in the nucleus. Its function is as follows. Transcriptional activator that binds the sequence 5'-ATCAATCAA-3'. Activates transcription of PF4 in complex with MEIS1. This chain is Pre-B-cell leukemia transcription factor 2 (PBX2), found in Homo sapiens (Human).